The sequence spans 248 residues: Mannose-binding protein C (248 aa).

The signal sequence occupies residues 1–20; the sequence is MSLFPSLPLLLLSMVAASYS. One can recognise a Collagen-like domain in the interval 42 to 99; sequence GINGFPGKDGRDGTKGEKGEPGQGLRGLQGPPGKLGPPGNPGPSGSPGPKGQKGDPGK. The disordered stretch occupies residues 43-113; the sequence is INGFPGKDGR…DSSLAASERK (71 aa). A 4-hydroxyproline modification is found at proline 47. Residues 49–61 show a composition bias toward basic and acidic residues; it reads KDGRDGTKGEKGE. 4 positions are modified to 4-hydroxyproline: proline 73, proline 79, proline 82, and proline 88. Residues 75-87 show a composition bias toward pro residues; sequence KLGPPGNPGPSGS. Basic and acidic residues predominate over residues 93–102; that stretch reads QKGDPGKSPD. Positions 112-130 form a coiled coil; it reads RKALQTEMARIKKWLTFSL. Residues 134-245 enclose the C-type lectin domain; that stretch reads VGNKFFLTNG…CSTSHLAVCE (112 aa). 2 cysteine pairs are disulfide-bonded: cysteine 155–cysteine 244 and cysteine 222–cysteine 236.

Oligomeric complex of 3 or more homotrimers. Interacts with MASP1 and MASP2. Interacts with MEP1A and MEP1B and may inhibit their catalytic activity. Hydroxylation on proline residues within the sequence motif, GXPG, is most likely to be 4-hydroxy as this fits the requirement for 4-hydroxylation in vertebrates.

Its subcellular location is the secreted. Functionally, calcium-dependent lectin involved in innate immune defense. Binds mannose, fucose and N-acetylglucosamine on different microorganisms and activates the lectin complement pathway. Binds to late apoptotic cells, as well as to apoptotic blebs and to necrotic cells, but not to early apoptotic cells, facilitating their uptake by macrophages. The protein is Mannose-binding protein C (MBL2) of Gorilla gorilla gorilla (Western lowland gorilla).